The chain runs to 64 residues: Large ribosomal subunit protein eL37 (64 aa).

The C4-type zinc-finger motif lies at 1-6 (GRCSAC). Zn(2+) is bound by residues cysteine 3 and cysteine 6.

Belongs to the eukaryotic ribosomal protein eL37 family. Zn(2+) is required as a cofactor.

In terms of biological role, binds to the 23S rRNA. The chain is Large ribosomal subunit protein eL37 (RPL37) from Solanum lycopersicum (Tomato).